Consider the following 289-residue polypeptide: MSFKDRLFICCQYLLPHHLLSRLVGFAADCRATWFKDRLIAWFARRYQVDMREAQVEDLQAYEHFNAFFTRALKDGARPPAQEPGAVLCPADGAISQLGPIEHGRIFQAKGHSYSLAELLGGDAELAAPFMGGDFATVYLSPRDYHRVHMPLAGTLREMVYVPGRLFSVNRTTAENVPELFARNERVVCLFDTERGPMAVVLVGAMIVASIETVWAGLVTPPKRELKTFRYDEAARAPIHLEKGAELGRFKLGSTAIVLFGPQQVAFAQGLGAATPVRMGECLALPKQA.

Active-site charge relay system; for autoendoproteolytic cleavage activity residues include Asp-92, His-149, and Ser-254. Ser-254 serves as the catalytic Schiff-base intermediate with substrate; via pyruvic acid; for decarboxylase activity. At Ser-254 the chain carries Pyruvic acid (Ser); by autocatalysis.

It belongs to the phosphatidylserine decarboxylase family. PSD-B subfamily. Prokaryotic type I sub-subfamily. Heterodimer of a large membrane-associated beta subunit and a small pyruvoyl-containing alpha subunit. The cofactor is pyruvate. Is synthesized initially as an inactive proenzyme. Formation of the active enzyme involves a self-maturation process in which the active site pyruvoyl group is generated from an internal serine residue via an autocatalytic post-translational modification. Two non-identical subunits are generated from the proenzyme in this reaction, and the pyruvate is formed at the N-terminus of the alpha chain, which is derived from the carboxyl end of the proenzyme. The autoendoproteolytic cleavage occurs by a canonical serine protease mechanism, in which the side chain hydroxyl group of the serine supplies its oxygen atom to form the C-terminus of the beta chain, while the remainder of the serine residue undergoes an oxidative deamination to produce ammonia and the pyruvoyl prosthetic group on the alpha chain. During this reaction, the Ser that is part of the protease active site of the proenzyme becomes the pyruvoyl prosthetic group, which constitutes an essential element of the active site of the mature decarboxylase.

The protein localises to the cell membrane. It carries out the reaction a 1,2-diacyl-sn-glycero-3-phospho-L-serine + H(+) = a 1,2-diacyl-sn-glycero-3-phosphoethanolamine + CO2. The protein operates within phospholipid metabolism; phosphatidylethanolamine biosynthesis; phosphatidylethanolamine from CDP-diacylglycerol: step 2/2. Its function is as follows. Catalyzes the formation of phosphatidylethanolamine (PtdEtn) from phosphatidylserine (PtdSer). This chain is Phosphatidylserine decarboxylase proenzyme, found in Pseudomonas paraeruginosa (strain DSM 24068 / PA7) (Pseudomonas aeruginosa (strain PA7)).